The chain runs to 487 residues: uncharacterized protein (487 aa).

Residues 7 to 28 traverse the membrane as a helical segment; sequence HVISIFETLGAYFINIFYNFLY. Residues Asn73, Asn83, and Asn195 are each glycosylated (N-linked (GlcNAc...) asparagine; by host). Residues 196–235 adopt a coiled-coil conformation; it reads RSLLHQIEELTSEKKSLLADLSTLRKKYEKRQSEYRRLVQ. Over residues 294 to 305 the composition is skewed to polar residues; sequence TSQELTSKSPNN. The disordered stretch occupies residues 294-324; sequence TSQELTSKSPNNYPVPHSRTIVSKPSDNYPV. A glycan (N-linked (GlcNAc...) asparagine; by host) is linked at Asn462.

This sequence belongs to the asfivirus B475L family.

The protein resides in the host membrane. This is an uncharacterized protein from African swine fever virus (isolate Tick/South Africa/Pretoriuskop Pr4/1996) (ASFV).